The chain runs to 110 residues: Large ribosomal subunit protein P2B (110 aa).

Position 29 is a phosphoserine (Ser-29). A Glycyl lysine isopeptide (Lys-Gly) (interchain with G-Cter in ubiquitin) cross-link involves residue Lys-49. Residues Val-66–Asp-110 are disordered. Positions Gly-69–Asp-86 are enriched in low complexity. Acidic residues predominate over residues Ala-87–Met-104. Phosphoserine is present on Ser-100.

It belongs to the eukaryotic ribosomal protein P1/P2 family. Component of the large ribosomal subunit (LSU). Mature yeast ribosomes consist of a small (40S) and a large (60S) subunit. The 40S small subunit contains 1 molecule of ribosomal RNA (18S rRNA) and 33 different proteins (encoded by 57 genes). The large 60S subunit contains 3 rRNA molecules (25S, 5.8S and 5S rRNA) and 46 different proteins (encoded by 81 genes). The 5 acidic ribosomal P-proteins form the stalk structure of the 60S subunit. They are organized as a pentameric complex in which uL10/P0 interacts with 2 heterodimers, P1A-P2B and P1B-P2A. Post-translationally, the N-terminus is not modified.

It localises to the cytoplasm. Component of the ribosome, a large ribonucleoprotein complex responsible for the synthesis of proteins in the cell. The small ribosomal subunit (SSU) binds messenger RNAs (mRNAs) and translates the encoded message by selecting cognate aminoacyl-transfer RNA (tRNA) molecules. The large subunit (LSU) contains the ribosomal catalytic site termed the peptidyl transferase center (PTC), which catalyzes the formation of peptide bonds, thereby polymerizing the amino acids delivered by tRNAs into a polypeptide chain. The nascent polypeptides leave the ribosome through a tunnel in the LSU and interact with protein factors that function in enzymatic processing, targeting, and the membrane insertion of nascent chains at the exit of the ribosomal tunnel. This Saccharomyces cerevisiae (strain ATCC 204508 / S288c) (Baker's yeast) protein is Large ribosomal subunit protein P2B.